A 317-amino-acid polypeptide reads, in one-letter code: Non-structural protein 2 (317 aa).

ATP is bound by residues 107 to 109 (SIR), lysine 188, and 221 to 223 (HGK). Residues 205–241 (LVAELRWQYNKFAVITHGKGHYRIVKYSSVANHADRV) are RNA-binding. Residue histidine 225 is the For NTPase and RTPase activities of the active site. Arginine 227 serves as a coordination point for ATP.

The protein belongs to the rotavirus NSP2 family. In terms of assembly, homooctamer. Interacts with VP1; this interaction is weak. Interacts with NSP5; this interaction leads to up-regulation of NSP5 phosphorylation and formation of viral factories. Interacts with host DCP1A, DCP1B, DDX6, EDC4 and EIF2S1/eIF2-alpha; these interactions are probably part of the sequestration of some host SGs and PBs proteins in viral factories. Mg(2+) is required as a cofactor.

It is found in the host cytoplasm. Participates in replication and packaging of the viral genome. Plays a crucial role, together with NSP5, in the formation of virus factories (viroplasms), which are large inclusions in the host cytoplasm where replication intermediates are assembled and viral RNA replication takes place. Displays ssRNA binding, NTPase, RNA triphosphatase (RTPase) and ATP-independent helix-unwinding activities. The unwinding activity may prepare and organize plus-strand RNAs for packaging and replication by removing interfering secondary structures. The RTPase activity plays a role in the removal of the gamma-phosphate from the rotavirus RNA minus strands of dsRNA genome segments. Participates in the selective exclusion of host proteins from stress granules (SG) and P bodies (PB). Also participates in the sequestration of these remodeled organelles in viral factories. This Rotavirus A (strain RVA/SA11-Patton/G3P[X]) (RV-A) protein is Non-structural protein 2.